Reading from the N-terminus, the 125-residue chain is uncharacterized protein (125 aa).

3 consecutive transmembrane segments (helical) span residues 20–42, 57–76, and 81–103; these read RNGG…LTIL, LMNA…GVVV, and YLFV…YMAS.

Its subcellular location is the cell membrane. This is an uncharacterized protein from Archaeoglobus fulgidus (strain ATCC 49558 / DSM 4304 / JCM 9628 / NBRC 100126 / VC-16).